Here is a 440-residue protein sequence, read N- to C-terminus: Amino acid transporter AVT6D (440 aa).

A run of 11 helical transmembrane segments spans residues 26–46, 47–67, 102–122, 149–169, 182–202, 219–239, 262–282, 309–329, 356–376, 377–397, and 410–430; these read FAGAVFNISTSIVGAGIMAIP, AAFKVLGVIPSLSIIVIIAWL, AVTVVTMVVTFGSMIIFSIII, WNTRFFGLLFIFVFLFLPLVL, ISFLLALLFVVISSVLAIIAL, GGLSFFSLFTASPVIVTAFTF, ISVILCATIYSATGLFCYLLF, IVRLSYAIHLMLVFPLLNFSL, FPLLISCFLGAIAIPDIWYFF, QFLGSTSTVSIAFIFPAAIVL, and IVASVMLVLAVATSIIAISTN.

It belongs to the amino acid/polyamine transporter 2 family. Amino acid/auxin permease (AAAP) (TC 2.A.18.6) subfamily.

It localises to the membrane. This Arabidopsis thaliana (Mouse-ear cress) protein is Amino acid transporter AVT6D.